Reading from the N-terminus, the 50-residue chain is Acidic phospholipase A2 1 (50 aa).

Positions 27, 29, and 31 each coordinate Ca(2+). C28 and C44 form a disulfide bridge. H47 is a catalytic residue. A Ca(2+)-binding site is contributed by D48.

This sequence belongs to the phospholipase A2 family. Group II subfamily. D49 sub-subfamily. Monomer. Ca(2+) is required as a cofactor. As to expression, expressed by the venom gland.

It is found in the secreted. It carries out the reaction a 1,2-diacyl-sn-glycero-3-phosphocholine + H2O = a 1-acyl-sn-glycero-3-phosphocholine + a fatty acid + H(+). Its function is as follows. Snake venom phospholipase A2 (PLA2) that displays a potent enzymatic activity as measured by indirect hemolysis of red blood cells. Is neither lethal when injected into mice nor does it present anticoagulant activity. Displays a moderate inhibitory activity on the aggregation of platelets induced by low levels of ADP, thrombin and arachidonate. In contrast, strongly inhibits platelet aggregation induced by high doses of collagen. Shows myotoxic activity, increases the plasma creatine-kinase activity and induces edema and myonecrosis of mouse skeletal muscles. PLA2 catalyzes the calcium-dependent hydrolysis of the 2-acyl groups in 3-sn-phosphoglycerides. The polypeptide is Acidic phospholipase A2 1 (Lachesis muta muta (Bushmaster)).